The chain runs to 96 residues: Co-chaperonin GroES (96 aa).

Belongs to the GroES chaperonin family. In terms of assembly, heptamer of 7 subunits arranged in a ring. Interacts with the chaperonin GroEL.

It localises to the cytoplasm. In terms of biological role, together with the chaperonin GroEL, plays an essential role in assisting protein folding. The GroEL-GroES system forms a nano-cage that allows encapsulation of the non-native substrate proteins and provides a physical environment optimized to promote and accelerate protein folding. GroES binds to the apical surface of the GroEL ring, thereby capping the opening of the GroEL channel. This chain is Co-chaperonin GroES, found in Vibrio atlanticus (strain LGP32) (Vibrio splendidus (strain Mel32)).